Reading from the N-terminus, the 338-residue chain is Ketol-acid reductoisomerase (NADP(+)) (338 aa).

The KARI N-terminal Rossmann domain maps to 1 to 181 (MKVYYDKDCD…GGGRTGIIET (181 aa)). NADP(+)-binding positions include 24-27 (YGSQ), Arg47, Ser50, Thr52, and 82-85 (DEFQ). His107 is an active-site residue. Residue Gly133 participates in NADP(+) binding. Residues 182-327 (TFKDETETDL…EQLRSMMPWI (146 aa)) enclose the KARI C-terminal knotted domain. Mg(2+) contacts are provided by Asp190, Glu194, Glu226, and Glu230. Substrate is bound at residue Ser251.

It belongs to the ketol-acid reductoisomerase family. Requires Mg(2+) as cofactor.

The enzyme catalyses (2R)-2,3-dihydroxy-3-methylbutanoate + NADP(+) = (2S)-2-acetolactate + NADPH + H(+). It catalyses the reaction (2R,3R)-2,3-dihydroxy-3-methylpentanoate + NADP(+) = (S)-2-ethyl-2-hydroxy-3-oxobutanoate + NADPH + H(+). It functions in the pathway amino-acid biosynthesis; L-isoleucine biosynthesis; L-isoleucine from 2-oxobutanoate: step 2/4. It participates in amino-acid biosynthesis; L-valine biosynthesis; L-valine from pyruvate: step 2/4. In terms of biological role, involved in the biosynthesis of branched-chain amino acids (BCAA). Catalyzes an alkyl-migration followed by a ketol-acid reduction of (S)-2-acetolactate (S2AL) to yield (R)-2,3-dihydroxy-isovalerate. In the isomerase reaction, S2AL is rearranged via a Mg-dependent methyl migration to produce 3-hydroxy-3-methyl-2-ketobutyrate (HMKB). In the reductase reaction, this 2-ketoacid undergoes a metal-dependent reduction by NADPH to yield (R)-2,3-dihydroxy-isovalerate. The chain is Ketol-acid reductoisomerase (NADP(+)) from Pseudomonas fluorescens (strain SBW25).